The sequence spans 606 residues: Kelch-like protein 41 (606 aa).

Ser3 carries the phosphoserine modification. The BTB domain occupies 33–100; that stretch reads IDCTLKAGDK…LYSASIDLND (68 aa). The BACK domain maps to 135 to 237; that stretch reads CLAILRLGLL…TEKYFKDHVE (103 aa). Kelch repeat units follow at residues 346 to 398, 399 to 447, 448 to 495, 497 to 542, and 544 to 599; these read QIYV…EVDD, KIYV…SHKG, MIYC…VHKG, IVIA…SLAG, and LYAI…TRLN.

Interacts with NRAP. Interacts with LASP1. Part of a complex that contains CUL3, RBX1 and KLHL41. Ubiquitinated by E3 ubiquitin ligase complex formed by CUL3 and RBX1 and probably targeted for proteasome-independent degradation. Quinone-induced oxidative stress increases its ubiquitination. In terms of tissue distribution, sarcomeric muscle.

It is found in the cytoplasm. The protein resides in the cytoskeleton. The protein localises to the cell projection. Its subcellular location is the pseudopodium. It localises to the ruffle. It is found in the myofibril. The protein resides in the sarcomere. The protein localises to the m line. Its subcellular location is the sarcoplasmic reticulum membrane. It localises to the endoplasmic reticulum membrane. Involved in skeletal muscle development and differentiation. Regulates proliferation and differentiation of myoblasts and plays a role in myofibril assembly by promoting lateral fusion of adjacent thin fibrils into mature, wide myofibrils. Required for pseudopod elongation in transformed cells. This chain is Kelch-like protein 41 (KLHL41), found in Homo sapiens (Human).